We begin with the raw amino-acid sequence, 276 residues long: Carbonic anhydrase Nec1 (276 aa).

The N-terminal stretch at Met-1–Ala-27 is a signal peptide. The 237-residue stretch at Arg-34–Cys-270 folds into the Alpha-carbonic anhydrase domain. A disulfide bridge links Cys-59 with Cys-220. Residue His-98 is the Proton acceptor of the active site. Zn(2+) contacts are provided by His-124 and His-126. The N-linked (GlcNAc...) asparagine glycan is linked to Asn-134. Position 143 (His-143) interacts with Zn(2+). The tract at residues Thr-216 to Thr-217 is substrate binding.

Belongs to the alpha-class carbonic anhydrase family. As to quaternary structure, homodimer. Zn(2+) is required as a cofactor. As to expression, confined to nectaries.

It carries out the reaction hydrogencarbonate + H(+) = CO2 + H2O. It participates in one-carbon metabolism. In terms of biological role, involved in the production of blood-red nectar containing the alkaloid nesocodin and that serves as a visual attractant for pollinator visitation, including vertebrates such as Phelsuma geckos. The nectar is initially acidic and pale yellow, but slowly becomes alkaline before turning into red within 24 hours. Together with NEC2 and NEC3, facilitates the condensation of sinapaldehyde ((E)-3,5-dimethoxy-4-hydroxycinnamaldehyde) and proline to form nesocodin, a pigment with a stable imine bond. Mediates the alkalinization (pH increase) of the flower nectar by catalyzing the reversible hydration of carbon dioxide. In Nesocodon mauritianus (Blue Mauritius bellflower), this protein is Carbonic anhydrase Nec1.